A 263-amino-acid chain; its full sequence is Aminoglycoside (3'') (9) adenylyltransferase (263 aa).

It carries out the reaction streptomycin + ATP = 3''-O-adenylylstreptomycin + diphosphate. The enzyme catalyses spectinomycin + ATP = 9-O-adenylylspectinomycin + diphosphate. In terms of biological role, mediates bacterial resistance to the antibiotics streptomycin and spectinomycin. The sequence is that of Aminoglycoside (3'') (9) adenylyltransferase from Escherichia coli.